Reading from the N-terminus, the 101-residue chain is Large ribosomal subunit protein uL24 (101 aa).

Belongs to the universal ribosomal protein uL24 family. Part of the 50S ribosomal subunit.

Its function is as follows. One of two assembly initiator proteins, it binds directly to the 5'-end of the 23S rRNA, where it nucleates assembly of the 50S subunit. One of the proteins that surrounds the polypeptide exit tunnel on the outside of the subunit. The protein is Large ribosomal subunit protein uL24 of Ligilactobacillus salivarius (strain UCC118) (Lactobacillus salivarius).